We begin with the raw amino-acid sequence, 875 residues long: Alanine--tRNA ligase (875 aa).

Zn(2+) is bound by residues histidine 567, histidine 571, cysteine 669, and histidine 673.

This sequence belongs to the class-II aminoacyl-tRNA synthetase family. Zn(2+) serves as cofactor.

It is found in the cytoplasm. The catalysed reaction is tRNA(Ala) + L-alanine + ATP = L-alanyl-tRNA(Ala) + AMP + diphosphate. Catalyzes the attachment of alanine to tRNA(Ala) in a two-step reaction: alanine is first activated by ATP to form Ala-AMP and then transferred to the acceptor end of tRNA(Ala). Also edits incorrectly charged Ser-tRNA(Ala) and Gly-tRNA(Ala) via its editing domain. This chain is Alanine--tRNA ligase, found in Geobacter sulfurreducens (strain ATCC 51573 / DSM 12127 / PCA).